Consider the following 518-residue polypeptide: Probable Xaa-Pro aminopeptidase HCDG_07916 (518 aa).

Residues Asp-289, Asp-300, Glu-437, and Glu-475 each coordinate Mn(2+).

Belongs to the peptidase M24B family. Mn(2+) serves as cofactor.

It carries out the reaction Release of any N-terminal amino acid, including proline, that is linked to proline, even from a dipeptide or tripeptide.. Its function is as follows. Catalyzes the removal of a penultimate prolyl residue from the N-termini of peptides. The polypeptide is Probable Xaa-Pro aminopeptidase HCDG_07916 (Ajellomyces capsulatus (strain H143) (Darling's disease fungus)).